Consider the following 513-residue polypeptide: Genome polyprotein (513 aa).

Serine 2 carries the N-acetylserine; by host modification. The interval 2–23 is interaction with STAT1; the sequence is STNPKPQRKTKRNTNRRPQDVK. The segment at 2 to 58 is interaction with EIF2AK2/PKR; it reads STNPKPQRKTKRNTNRRPQDVKFPGGGQIVGGVYLLPRRGPRLGVRATRKTSERSQP. The interaction with DDX3X stretch occupies residues 2–59; the sequence is STNPKPQRKTKRNTNRRPQDVKFPGGGQIVGGVYLLPRRGPRLGVRATRKTSERSQPR. Residues 2–75 are disordered; that stretch reads STNPKPQRKT…PKARRPEGRA (74 aa). Residues 2-168 are Cytoplasmic-facing; that stretch reads STNPKPQRKT…EDSVNYATGN (167 aa). 2 consecutive short sequence motifs (nuclear localization signal) follow at residues 5 to 13 and 38 to 43; these read PKPQRKTKR and PRRGPR. Basic residues predominate over residues 7 to 16; that stretch reads PQRKTKRNTN. A compositionally biased stretch (low complexity) spans 32–47; it reads GGVYLLPRRGPRLGVR. Residue serine 53 is modified to Phosphoserine; by host. 2 short sequence motifs (nuclear localization signal) span residues 58-64 and 66-71; these read PRGRRQP and PKARRP. Over residues 58-68 the composition is skewed to basic residues; the sequence is PRGRRQPIPKA. Residue serine 99 is modified to Phosphoserine; by host. The important for endoplasmic reticulum and mitochondrial localization stretch occupies residues 112 to 152; sequence PRRRSRNLGKVIDTLTCGFADLMGYIPLVGAPLGGAARALA. Serine 116 carries the post-translational modification Phosphoserine; by host PKA. An interaction with APOA2 region spans residues 122–173; the sequence is VIDTLTCGFADLMGYIPLVGAPLGGAARALAHGVRVLEDSVNYATGNLPGCS. Positions 164–167 are important for lipid droplets localization; that stretch reads YATG. A helical transmembrane segment spans residues 169–189; that stretch reads LPGCSFSIFLLALLSCLTIPA. Positions 178-191 are cleaved as a propeptide — ER anchor for the core protein, removed in mature form by host signal peptidase; that stretch reads LLALLSCLTIPASA. At 190-358 the chain is on the lumenal side; it reads SAYEVRNVSG…TGAHWGVLAG (169 aa). N-linked (GlcNAc...) asparagine; by host glycans are attached at residues asparagine 196, asparagine 209, asparagine 234, and asparagine 250. The segment at 265–296 is important for fusion; it reads LVGAATFCSAMYVGDLCGSVFLVSQLFTFSPR. N-linked (GlcNAc...) asparagine; by host glycosylation is present at asparagine 305. Residues 359-379 traverse the membrane as a helical segment; the sequence is LAYYSMVGNWAKVLIVMLLFA. At 380 to 513 the chain is on the lumenal side; the sequence is GVDGTTHVTG…GPVYCFTPSP (134 aa). The HVR1 stretch occupies residues 385 to 411; sequence THVTGGATGHTTSGIASLFLPGASQKI. 4 N-linked (GlcNAc...) (high mannose) asparagine; by host glycosylation sites follow: asparagine 417, asparagine 423, asparagine 430, and asparagine 448. The tract at residues 474 to 479 is HVR2; that stretch reads YTEPGD. The tract at residues 480–493 is CD81-binding 1; it reads SDQKPYCWHYAPQR.

It belongs to the hepacivirus polyprotein family. As to quaternary structure, homooligomer. Interacts with E1 (via C-terminus). Interacts with the non-structural protein 5A. Interacts (via N-terminus) with host STAT1 (via SH2 domain); this interaction results in decreased STAT1 phosphorylation and ubiquitin-mediated proteasome-dependent STAT1 degradation, leading to decreased IFN-stimulated gene transcription. Interacts with host STAT3; this interaction constitutively activates STAT3. Interacts with host LTBR receptor. Interacts with host TNFRSF1A receptor and possibly induces apoptosis. Interacts with host HNRPK. Interacts with host YWHAE. Interacts with host UBE3A/E6AP. Interacts with host DDX3X. Interacts with host APOA2. Interacts with host RXRA protein. Interacts with host SP110 isoform 3/Sp110b; this interaction sequesters the transcriptional corepressor SP110 away from the nucleus. Interacts with host CREB3 nuclear transcription protein; this interaction triggers cell transformation. Interacts with host ACY3. Interacts with host C1QR1. Interacts with host RBM24; this interaction, which enhances the interaction of the mature core protein with 5'-UTR, may inhibit viral translation and favor replication. Interacts with host EIF2AK2/PKR; this interaction induces the autophosphorylation of EIF2AK2. Part of the viral assembly initiation complex composed of NS2, E1, E2, NS3, NS4A, NS5A and the mature core protein. Forms a heterodimer with envelope glycoprotein E2. Interacts with mature core protein. Interacts with protease NS2. The heterodimer E1/E2 interacts with host CLDN1; this interaction plays a role in viral entry into host cell. Interacts with host SPSB2 (via C-terminus). Part of the viral assembly initiation complex composed of NS2, E1, E2, NS3, NS4A, NS5A and the mature core protein. In terms of assembly, forms a heterodimer with envelope glycoprotein E1. Interacts with host CD81 and SCARB1 receptors; these interactions play a role in viral entry into host cell. Interacts with host EIF2AK2/PKR; this interaction inhibits EIF2AK2 and probably allows the virus to evade the innate immune response. Interacts with host CD209/DC-SIGN and CLEC4M/DC-SIGNR. Interact with host SPCS1; this interaction is essential for viral particle assembly. Interacts with protease NS2. The heterodimer E1/E2 interacts with host CLDN1; this interaction plays a role in viral entry into host cell. Part of the viral assembly initiation complex composed of NS2, E1, E2, NS3, NS4A, NS5A and the mature core protein. In terms of processing, specific enzymatic cleavages in vivo yield mature proteins. The structural proteins, core, E1, E2 and p7 are produced by proteolytic processing by host signal peptidases. The core protein precursor is synthesized as a 23 kDa, which is retained in the ER membrane through the hydrophobic signal peptide. Cleavage by the signal peptidase releases the 21 kDa mature core protein. The cleavage of the core protein precursor occurs between aminoacids 176 and 188 but the exact cleavage site is not known. Some degraded forms of the core protein appear as well during the course of infection. The other proteins (p7, NS2, NS3, NS4A, NS4B, NS5A and NS5B) are cleaved by the viral proteases. Autoprocessing between NS2 and NS3 is mediated by the NS2 cysteine protease catalytic domain and regulated by the NS3 N-terminal domain. Post-translationally, phosphorylated by host PKC and PKA. Ubiquitinated; mediated by UBE3A and leading to core protein subsequent proteasomal degradation. In terms of processing, highly N-glycosylated.

The protein resides in the host endoplasmic reticulum membrane. The protein localises to the host mitochondrion membrane. Its subcellular location is the virion. It localises to the host cytoplasm. It is found in the host nucleus. The protein resides in the host lipid droplet. The protein localises to the virion membrane. Its function is as follows. Packages viral RNA to form a viral nucleocapsid, and promotes virion budding. Participates in the viral particle production as a result of its interaction with the non-structural protein 5A. Binds RNA and may function as a RNA chaperone to induce the RNA structural rearrangements taking place during virus replication. Modulates viral translation initiation by interacting with viral IRES and 40S ribosomal subunit. Affects various cell signaling pathways, host immunity and lipid metabolism. Prevents the establishment of cellular antiviral state by blocking the interferon-alpha/beta (IFN-alpha/beta) and IFN-gamma signaling pathways and by blocking the formation of phosphorylated STAT1 and promoting ubiquitin-mediated proteasome-dependent degradation of STAT1. Activates STAT3 leading to cellular transformation. Regulates the activity of cellular genes, including c-myc and c-fos. May repress the promoter of p53, and sequester CREB3 and SP110 isoform 3/Sp110b in the cytoplasm. Represses cell cycle negative regulating factor CDKN1A, thereby interrupting an important check point of normal cell cycle regulation. Targets transcription factors involved in the regulation of inflammatory responses and in the immune response: suppresses TNF-induced NF-kappa-B activation, and activates AP-1. Binds to dendritic cells (DCs) via C1QR1, resulting in down-regulation of T-lymphocytes proliferation. Alters lipid metabolism by interacting with hepatocellular proteins involved in lipid accumulation and storage. Induces up-regulation of FAS promoter activity, and thereby contributes to the increased triglyceride accumulation in hepatocytes (steatosis). Functionally, forms a heterodimer with envelope glycoprotein E2, which mediates virus attachment to the host cell, virion internalization through clathrin-dependent endocytosis and fusion with host membrane. Fusion with the host cell is most likely mediated by both E1 and E2, through conformational rearrangements of the heterodimer required for fusion rather than a classical class II fusion mechanism. E1/E2 heterodimer binds host apolipoproteins such as APOB and ApoE thereby forming a lipo-viro-particle (LVP). APOE associated to the LVP allows the initial virus attachment to cell surface receptors such as the heparan sulfate proteoglycans (HSPGs), syndecan-1 (SDC1), syndecan-1 (SDC2), the low-density lipoprotein receptor (LDLR) and scavenger receptor class B type I (SCARB1). The cholesterol transfer activity of SCARB1 allows E2 exposure and binding of E2 to SCARB1 and the tetraspanin CD81. E1/E2 heterodimer binding on CD81 activates the epithelial growth factor receptor (EGFR) signaling pathway. Diffusion of the complex E1-E2-EGFR-SCARB1-CD81 to the cell lateral membrane allows further interaction with Claudin 1 (CLDN1) and occludin (OCLN) to finally trigger HCV entry. Forms a heterodimer with envelope glycoprotein E1, which mediates virus attachment to the host cell, virion internalization through clathrin-dependent endocytosis and fusion with host membrane. Fusion with the host cell is most likely mediated by both E1 and E2, through conformational rearrangements of the heterodimer required for fusion rather than a classical class II fusion mechanism. The interaction between envelope glycoprotein E2 and host apolipoprotein E/APOE allows the proper assembly, maturation and infectivity of the viral particles. This interaction is probably promoted via the up-regulation of cellular autophagy by the virus. E1/E2 heterodimer binds host apolipoproteins such as APOB and APOE thereby forming a lipo-viro-particle (LVP). APOE associated to the LVP allows the initial virus attachment to cell surface receptors such as the heparan sulfate proteoglycans (HSPGs), syndecan-1 (SDC1), syndecan-1 (SDC2), the low-density lipoprotein receptor (LDLR) and scavenger receptor class B type I (SCARB1). The cholesterol transfer activity of SCARB1 allows E2 exposure and binding of E2 to SCARB1 and the tetraspanin CD81. E1/E2 heterodimer binding on CD81 activates the epithelial growth factor receptor (EGFR) signaling pathway. Diffusion of the complex E1-E2-EGFR-SCARB1-CD81 to the cell lateral membrane allows further interaction with Claudin 1 (CLDN1) and occludin (OCLN) to finally trigger HCV entry. Inhibits host EIF2AK2/PKR activation, preventing the establishment of an antiviral state. Viral ligand for CD209/DC-SIGN and CLEC4M/DC-SIGNR, which are respectively found on dendritic cells (DCs), and on liver sinusoidal endothelial cells and macrophage-like cells of lymph node sinuses. These interactions allow the capture of circulating HCV particles by these cells and subsequent facilitated transmission to permissive cells such as hepatocytes and lymphocyte subpopulations. This Homo sapiens (Human) protein is Genome polyprotein.